The chain runs to 278 residues: Tryptophan synthase alpha chain (278 aa).

Catalysis depends on proton acceptor residues Glu49 and Asp60.

The protein belongs to the TrpA family. In terms of assembly, tetramer of two alpha and two beta chains.

The catalysed reaction is (1S,2R)-1-C-(indol-3-yl)glycerol 3-phosphate + L-serine = D-glyceraldehyde 3-phosphate + L-tryptophan + H2O. It participates in amino-acid biosynthesis; L-tryptophan biosynthesis; L-tryptophan from chorismate: step 5/5. In terms of biological role, the alpha subunit is responsible for the aldol cleavage of indoleglycerol phosphate to indole and glyceraldehyde 3-phosphate. This Rhodopirellula baltica (strain DSM 10527 / NCIMB 13988 / SH1) protein is Tryptophan synthase alpha chain.